A 115-amino-acid polypeptide reads, in one-letter code: Large ribosomal subunit protein bL20 (115 aa).

Belongs to the bacterial ribosomal protein bL20 family.

In terms of biological role, binds directly to 23S ribosomal RNA and is necessary for the in vitro assembly process of the 50S ribosomal subunit. It is not involved in the protein synthesizing functions of that subunit. This is Large ribosomal subunit protein bL20 from Cytophaga hutchinsonii (strain ATCC 33406 / DSM 1761 / CIP 103989 / NBRC 15051 / NCIMB 9469 / D465).